Reading from the N-terminus, the 908-residue chain is Glutamate receptor ionotropic, kainate 2 (908 aa).

Residues 1–31 form the signal peptide; that stretch reads MKIISPVLSNLVFSRSIKVLLCLLWIGYSQG. Residues 32–561 are Extracellular-facing; it reads TTHVLRFGGI…VFSFLNPLSP (530 aa). N-linked (GlcNAc...) asparagine glycans are attached at residues Asn67, Asn73, Asn275, Asn378, Asn412, Asn423, and Asn430. Cys96 and Cys347 are disulfide-bonded. L-glutamate-binding residues include Pro516, Ala518, and Arg523. Asn546 carries N-linked (GlcNAc...) asparagine glycosylation. A helical transmembrane segment spans residues 562-582; the sequence is DIWMYILLAYLGVSCVLFVIA. Residues 583–638 are Cytoplasmic-facing; that stretch reads RFSPYEWYNPHPCNPDSDVVENNFTLLNSFWFGVGALMQQGSELMPKALSTRIVGG. Residues 639–659 traverse the membrane as a helical segment; the sequence is IWWFFTLIIISSYTANLAAFL. The Extracellular portion of the chain corresponds to 660 to 819; sequence TVERMESPID…KEASALGVQN (160 aa). The L-glutamate site is built by Ala689, Thr690, and Glu738. Cys750 and Cys804 are oxidised to a cystine. N-linked (GlcNAc...) asparagine glycosylation is present at Asn751. A helical membrane pass occupies residues 820 to 840; it reads IGGIFIVLAAGLVLSVFVAVG. Over 841–908 the chain is Cytoplasmic; that stretch reads EFLYKSKKNA…RRLPGKETMA (68 aa). Residues Ser846 and Ser868 each carry the phosphoserine; by PKC modification. Lys886 is covalently cross-linked (Glycyl lysine isopeptide (Lys-Gly) (interchain with G-Cter in SUMO1)).

This sequence belongs to the glutamate-gated ion channel (TC 1.A.10.1) family. GRIK2 subfamily. In terms of assembly, homotetramer and heterotetramer with GRIK5. Tetramers may be formed by the dimerization of dimers. Assembles into a kainate-gated homomeric channel that does not bind AMPA. Can form functional heteromeric receptors with GRIK3. Forms a heteromeric complex with GRIK4 and GRIK5. Interacts with DLG4. Interacts (via C-terminus) with KLHL17 (via kelch repeats); the interaction targets GRIK2 for degradation via ubiquitin-proteasome pathway. Interacts with NETO2. In terms of processing, sumoylation mediates kainate receptor-mediated endocytosis and regulates synaptic transmission. Sumoylation is enhanced by PIAS3 and desumoylated by SENP1. Ubiquitinated. Ubiquitination regulates the GRIK2 levels at the synapse by leading kainate receptor degradation through proteasome. Post-translationally, phosphorylated by PKC at Ser-868 upon agonist activation, this directly enhance sumoylation. Expressed in the hippocampal mossy fiber synapses (at protein level). Most abundant in the cerebellum and the hypothalamus. Expressed in a proportion of dorsal root ganglion (DRG) neurons (13.6%); predominantly small diameter DRG neurons (75%) with the remainder expressed in medium diameter DRG neurons.

It is found in the cell membrane. It localises to the postsynaptic cell membrane. It catalyses the reaction Ca(2+)(in) = Ca(2+)(out). The catalysed reaction is Na(+)(in) = Na(+)(out). Its activity is regulated as follows. Cold receptor activity activated by temperatures between 10-19 degrees Celsius. Functionally, ionotropic glutamate receptor that functions as a cation-permeable ligand-gated ion channel, gated by L-glutamate and the glutamatergic agonist kainic acid. L-glutamate acts as an excitatory neurotransmitter at many synapses in the central nervous system. Binding of the excitatory neurotransmitter L-glutamate induces a conformation change, leading to the opening of the cation channel, and thereby converts the chemical signal to an electrical impulse. The receptor then desensitizes rapidly and enters a transient inactive state, characterized by the presence of bound agonist. Modulates cell surface expression of NETO2. In association with GRIK3, involved in presynaptic facilitation of glutamate release at hippocampal mossy fiber synapses. Its function is as follows. Independent of its ionotropic glutamate receptor activity, acts as a thermoreceptor conferring sensitivity to cold temperatures. Functions in dorsal root ganglion neurons. In terms of biological role, ionotropic glutamate receptor that functions as a cation-permeable ligand-gated ion channel, gated by L-glutamate and the glutamatergic agonist kainic acid. The sequence is that of Glutamate receptor ionotropic, kainate 2 (Grik2) from Mus musculus (Mouse).